A 471-amino-acid polypeptide reads, in one-letter code: Alpha-galactosidase 2 (471 aa).

The first 18 residues, 1 to 18 (MFAFYFLTACISLKGVFG), serve as a signal peptide directing secretion. A disulfide bridge links Cys-42 with Cys-74. Substrate-binding residues include Asp-72 and Asp-73. The N-linked (GlcNAc...) asparagine glycan is linked to Asn-105. Residues Cys-121 and Cys-151 are joined by a disulfide bond. Residue Lys-147 coordinates substrate. Asp-149 serves as the catalytic Nucleophile. N-linked (GlcNAc...) asparagine glycosylation is present at Asn-175. Arg-205 contacts substrate. Asp-209 (proton donor) is an active-site residue. 2 disulfide bridges follow: Cys-221/Cys-237 and Cys-223/Cys-230. Gln-251 is a substrate binding site. Asn-270, Asn-370, Asn-403, Asn-413, Asn-422, Asn-435, and Asn-454 each carry an N-linked (GlcNAc...) asparagine glycan.

Belongs to the glycosyl hydrolase 27 family. As to quaternary structure, homotetramer.

It localises to the secreted. The catalysed reaction is Hydrolysis of terminal, non-reducing alpha-D-galactose residues in alpha-D-galactosides, including galactose oligosaccharides, galactomannans and galactolipids.. This Saccharomyces cerevisiae (Baker's yeast) protein is Alpha-galactosidase 2 (MEL2).